Here is a 183-residue protein sequence, read N- to C-terminus: Probable RNA 2'-phosphotransferase (183 aa).

It belongs to the KptA/TPT1 family.

Its function is as follows. Removes the 2'-phosphate from RNA via an intermediate in which the phosphate is ADP-ribosylated by NAD followed by a presumed transesterification to release the RNA and generate ADP-ribose 1''-2''-cyclic phosphate (APPR&gt;P). May function as an ADP-ribosylase. This Clostridium perfringens (strain 13 / Type A) protein is Probable RNA 2'-phosphotransferase.